A 432-amino-acid polypeptide reads, in one-letter code: Adenylosuccinate synthetase (432 aa).

Residues 12 to 18 and 40 to 42 contribute to the GTP site; these read GDEGKGK and GHT. D13 serves as the catalytic Proton acceptor. Residues D13 and G40 each contribute to the Mg(2+) site. Residues 13–16, 38–41, T126, R140, Q219, T234, and R300 each bind IMP; these read DEGK and NAGH. The active-site Proton donor is H41. 296-302 is a substrate binding site; it reads STTGRPR. Residues R302, 328 to 330, and 410 to 412 contribute to the GTP site; these read KLD and STG.

Belongs to the adenylosuccinate synthetase family. As to quaternary structure, homodimer. Mg(2+) serves as cofactor.

Its subcellular location is the cytoplasm. It carries out the reaction IMP + L-aspartate + GTP = N(6)-(1,2-dicarboxyethyl)-AMP + GDP + phosphate + 2 H(+). Its pathway is purine metabolism; AMP biosynthesis via de novo pathway; AMP from IMP: step 1/2. Functionally, plays an important role in the de novo pathway of purine nucleotide biosynthesis. Catalyzes the first committed step in the biosynthesis of AMP from IMP. The protein is Adenylosuccinate synthetase of Aquifex aeolicus (strain VF5).